We begin with the raw amino-acid sequence, 251 residues long: Putative F-box protein L166 (251 aa).

Residues 1-46 (MDNICELFDEILPLIIEYLSDHDKVKFMTTCSRLYYFIDKVYYENI) enclose the F-box domain. Positions 188 to 251 (PEPESQENFR…RPKSFMKYRR (64 aa)) are disordered. A compositionally biased stretch (polar residues) spans 202 to 217 (TESNNNKPVNKSQPQI). Residues 241 to 251 (KRPKSFMKYRR) show a composition bias toward basic residues.

This is Putative F-box protein L166 from Acanthamoeba polyphaga (Amoeba).